Here is a 60-residue protein sequence, read N- to C-terminus: Single-pass membrane and coiled-coil domain-containing protein 4 homolog (60 aa).

The interval 1 to 22 (MRKLRGGQTRETRKQKQERREE) is disordered. Residues 8–22 (QTRETRKQKQERREE) show a composition bias toward basic and acidic residues. Residues 8–34 (QTRETRKQKQERREENQKIQQQLKTIV) are a coiled coil. The helical transmembrane segment at 30–50 (LKTIVLPICGVVFLCIVAYVF) threads the bilayer.

It belongs to the SMCO4 family.

The protein resides in the membrane. The chain is Single-pass membrane and coiled-coil domain-containing protein 4 homolog from Culex quinquefasciatus (Southern house mosquito).